Here is a 384-residue protein sequence, read N- to C-terminus: Putative D-galactosamine-6-phosphate deaminase AgaS (384 aa).

SIS domains lie at 45–197 (LEPL…SQTF) and 215–364 (SEGV…PDTP).

It belongs to the SIS family. AgaS subfamily.

It catalyses the reaction D-galactosamine 6-phosphate + H2O = D-tagatopyranose 1-phosphate + NH4(+). Its function is as follows. Catalyzes the isomerization-deamination of galactosamine 6-phosphate to form tagatofuranose 6-phosphate and ammonium ion. The polypeptide is Putative D-galactosamine-6-phosphate deaminase AgaS (agaS) (Escherichia coli (strain K12)).